A 906-amino-acid chain; its full sequence is Gamma-tubulin complex component 3 homolog (906 aa).

Positions 208-229 are enriched in polar residues; sequence GQQPSQQSTTTKGLPNTVSRNV. Positions 208 to 242 are disordered; sequence GQQPSQQSTTTKGLPNTVSRNVPRTRREGDSSGSV.

The protein belongs to the TUBGCP family. As to quaternary structure, interacts with gamma-tubulin.

The protein resides in the cytoplasm. The protein localises to the cytoskeleton. It is found in the microtubule organizing center. Its subcellular location is the centrosome. Functionally, necessary for the recruitment of gamma-tubulin to the centrosome and for the formation of a functional centrosome. The polypeptide is Gamma-tubulin complex component 3 homolog (tubgcp3) (Xenopus laevis (African clawed frog)).